Consider the following 277-residue polypeptide: Urease accessory protein UreD (277 aa).

It belongs to the UreD family. UreD, UreF and UreG form a complex that acts as a GTP-hydrolysis-dependent molecular chaperone, activating the urease apoprotein by helping to assemble the nickel containing metallocenter of UreC. The UreE protein probably delivers the nickel.

The protein localises to the cytoplasm. Required for maturation of urease via the functional incorporation of the urease nickel metallocenter. The polypeptide is Urease accessory protein UreD (Yersinia pestis (strain Pestoides F)).